Consider the following 249-residue polypeptide: Ribonuclease 3 (249 aa).

The region spanning 21–149 is the RNase III domain; that stretch reads VDHQPLIDAL…LLGAIYLAHG (129 aa). Residue E62 coordinates Mg(2+). D66 is a catalytic residue. Residues D135 and E138 each coordinate Mg(2+). The active site involves E138. One can recognise a DRBM domain in the interval 176 to 244; the sequence is DWKTTLQERL…AHKAVGFLQD (69 aa).

This sequence belongs to the ribonuclease III family. Homodimer. The cofactor is Mg(2+).

Its subcellular location is the cytoplasm. It carries out the reaction Endonucleolytic cleavage to 5'-phosphomonoester.. In terms of biological role, digests double-stranded RNA. Involved in the processing of primary rRNA transcript to yield the immediate precursors to the large and small rRNAs (23S and 16S). Processes some mRNAs, and tRNAs when they are encoded in the rRNA operon. Processes pre-crRNA and tracrRNA of type II CRISPR loci if present in the organism. The protein is Ribonuclease 3 of Corynebacterium diphtheriae (strain ATCC 700971 / NCTC 13129 / Biotype gravis).